Here is a 383-residue protein sequence, read N- to C-terminus: Acetylornithine deacetylase (383 aa).

Position 80 (histidine 80) interacts with Zn(2+). Aspartate 82 is an active-site residue. Aspartate 112 provides a ligand contact to Zn(2+). Glutamate 144 is a catalytic residue. Zn(2+) is bound by residues glutamate 145, glutamate 169, and histidine 355.

It belongs to the peptidase M20A family. ArgE subfamily. Homodimer. Zn(2+) serves as cofactor. Co(2+) is required as a cofactor. It depends on glutathione as a cofactor.

It is found in the cytoplasm. The enzyme catalyses N(2)-acetyl-L-ornithine + H2O = L-ornithine + acetate. Its pathway is amino-acid biosynthesis; L-arginine biosynthesis; L-ornithine from N(2)-acetyl-L-ornithine (linear): step 1/1. Functionally, catalyzes the hydrolysis of the amide bond of N(2)-acetylated L-amino acids. Cleaves the acetyl group from N-acetyl-L-ornithine to form L-ornithine, an intermediate in L-arginine biosynthesis pathway, and a branchpoint in the synthesis of polyamines. In Escherichia coli O9:H4 (strain HS), this protein is Acetylornithine deacetylase.